A 344-amino-acid chain; its full sequence is N-acetyl-gamma-glutamyl-phosphate reductase (344 aa).

The active site involves C150.

The protein belongs to the NAGSA dehydrogenase family. Type 1 subfamily.

The protein localises to the cytoplasm. The enzyme catalyses N-acetyl-L-glutamate 5-semialdehyde + phosphate + NADP(+) = N-acetyl-L-glutamyl 5-phosphate + NADPH + H(+). It functions in the pathway amino-acid biosynthesis; L-arginine biosynthesis; N(2)-acetyl-L-ornithine from L-glutamate: step 3/4. Functionally, catalyzes the NADPH-dependent reduction of N-acetyl-5-glutamyl phosphate to yield N-acetyl-L-glutamate 5-semialdehyde. The chain is N-acetyl-gamma-glutamyl-phosphate reductase from Pseudomonas fluorescens (strain SBW25).